A 484-amino-acid polypeptide reads, in one-letter code: uncharacterized protein (484 aa).

The segment covering 1–14 (MIDSTSTATATSKT) has biased composition (low complexity). Residues 1-32 (MIDSTSTATATSKTVELNTNGSKTDASSENGT) form a disordered region. Residues 15–32 (VELNTNGSKTDASSENGT) show a composition bias toward polar residues. An N6-(pyridoxal phosphate)lysine modification is found at K305.

Belongs to the class-III pyridoxal-phosphate-dependent aminotransferase family. Pyridoxal 5'-phosphate serves as cofactor.

This is an uncharacterized protein from Schizosaccharomyces pombe (strain 972 / ATCC 24843) (Fission yeast).